Consider the following 197-residue polypeptide: Chaperone protein dnaJ 20, chloroplastic (197 aa).

Residues 1-60 constitute a chloroplast transit peptide; sequence MKCYKSSSILSTNHHPFFYKQQPISSLQPTSIPTTISYPTRTRFSSTRIQSRLTHDDPVK. One can recognise a J domain in the interval 66–133; the sequence is SFYDLLGVTE…RRRVLYDRDL (68 aa). A disordered region spans residues 169 to 197; the sequence is SGLRRRSNQKDNNTMSWAARMRRQQQESS.

The protein belongs to the DnaJ family. C/III subfamily. In terms of tissue distribution, light-grown seedlings.

It is found in the plastid. The protein localises to the chloroplast. Functionally, plays a continuous role in plant development probably in the structural organization of compartments. The sequence is that of Chaperone protein dnaJ 20, chloroplastic (ATJ20) from Arabidopsis thaliana (Mouse-ear cress).